Here is a 634-residue protein sequence, read N- to C-terminus: UPF0329 protein ECU11_2090 (634 aa).

Basic and acidic residues-rich tracts occupy residues 354-365 (REEREKREESKG) and 397-407 (GESKEEDRGEE). Residues 354-438 (REEREKREES…KGSGEKRISE (85 aa)) form a disordered region. Residues 408 to 417 (GGVEAEDPLE) are compositionally biased toward acidic residues.

It belongs to the UPF0329 family.

This Encephalitozoon cuniculi (strain GB-M1) (Microsporidian parasite) protein is UPF0329 protein ECU11_2090.